Here is a 380-residue protein sequence, read N- to C-terminus: Probable protein phosphatase 2C 2 (380 aa).

The region spanning 69–339 (RSGSFADIGP…DNLTVIVICF (271 aa)) is the PPM-type phosphatase domain. Asp-113, Gly-114, Asp-287, and Asp-330 together coordinate Mn(2+).

The protein belongs to the PP2C family. Mg(2+) is required as a cofactor. The cofactor is Mn(2+).

The enzyme catalyses O-phospho-L-seryl-[protein] + H2O = L-seryl-[protein] + phosphate. It carries out the reaction O-phospho-L-threonyl-[protein] + H2O = L-threonyl-[protein] + phosphate. The chain is Probable protein phosphatase 2C 2 from Oryza sativa subsp. japonica (Rice).